A 305-amino-acid polypeptide reads, in one-letter code: Acyl transferase (305 aa).

Catalysis depends on charge relay system residues serine 116, aspartate 213, and histidine 243.

This sequence belongs to the LuxD family.

It participates in lipid metabolism; fatty acid reduction for biolumincescence. Acyl transferase is part of the fatty acid reductase system required for aldehyde biosynthesis; it produces fatty acids for the luminescent reaction. The chain is Acyl transferase from Photobacterium leiognathi.